The sequence spans 314 residues: 4-hydroxy-3-methylbut-2-enyl diphosphate reductase (314 aa).

Cys12 provides a ligand contact to [4Fe-4S] cluster. (2E)-4-hydroxy-3-methylbut-2-enyl diphosphate contacts are provided by His41 and His74. Dimethylallyl diphosphate contacts are provided by His41 and His74. Isopentenyl diphosphate contacts are provided by His41 and His74. Residue Cys96 participates in [4Fe-4S] cluster binding. (2E)-4-hydroxy-3-methylbut-2-enyl diphosphate is bound at residue His124. His124 serves as a coordination point for dimethylallyl diphosphate. His124 is an isopentenyl diphosphate binding site. The active-site Proton donor is Glu126. Residue Thr167 coordinates (2E)-4-hydroxy-3-methylbut-2-enyl diphosphate. Cys197 serves as a coordination point for [4Fe-4S] cluster. 4 residues coordinate (2E)-4-hydroxy-3-methylbut-2-enyl diphosphate: Ser225, Ser226, Asn227, and Ser269. Residues Ser225, Ser226, Asn227, and Ser269 each contribute to the dimethylallyl diphosphate site. Ser225, Ser226, Asn227, and Ser269 together coordinate isopentenyl diphosphate.

Belongs to the IspH family. The cofactor is [4Fe-4S] cluster.

The enzyme catalyses isopentenyl diphosphate + 2 oxidized [2Fe-2S]-[ferredoxin] + H2O = (2E)-4-hydroxy-3-methylbut-2-enyl diphosphate + 2 reduced [2Fe-2S]-[ferredoxin] + 2 H(+). It carries out the reaction dimethylallyl diphosphate + 2 oxidized [2Fe-2S]-[ferredoxin] + H2O = (2E)-4-hydroxy-3-methylbut-2-enyl diphosphate + 2 reduced [2Fe-2S]-[ferredoxin] + 2 H(+). It functions in the pathway isoprenoid biosynthesis; dimethylallyl diphosphate biosynthesis; dimethylallyl diphosphate from (2E)-4-hydroxy-3-methylbutenyl diphosphate: step 1/1. It participates in isoprenoid biosynthesis; isopentenyl diphosphate biosynthesis via DXP pathway; isopentenyl diphosphate from 1-deoxy-D-xylulose 5-phosphate: step 6/6. Catalyzes the conversion of 1-hydroxy-2-methyl-2-(E)-butenyl 4-diphosphate (HMBPP) into a mixture of isopentenyl diphosphate (IPP) and dimethylallyl diphosphate (DMAPP). Acts in the terminal step of the DOXP/MEP pathway for isoprenoid precursor biosynthesis. The sequence is that of 4-hydroxy-3-methylbut-2-enyl diphosphate reductase from Haemophilus influenzae (strain ATCC 51907 / DSM 11121 / KW20 / Rd).